The sequence spans 469 residues: MTMSQEENPVKPWGGRFSEPTDAFVERFTASVTFDQRLYHHDINGSIAHATMLASVGVLSEDEKTAIIDGLEAIRSDIVEGKFDWSISLEDVHMNIEAELTKRIGITGKKLHTGRSRNDQVATDIRLYLRDEIDNIAKELTRLQSGILDLAEREADTIMPGFTHLQTAQPVTFGHHLMAWYEMMTRDYTRLMDCRERLNQSPLGAAALAGTTYPIDREQTAALLGFNHPTRNSLDSVSDRDFAIEFSAFAAILMTHLSRASEELVLWASAQFNFINLPDRFCTGSSIMPQKKNPDVPELVRGKTGRVNGHLISLLTLMKSQPLAYNKDNQEDKEPLFDAIDTVKDCLRAFADMVPAIESKKESMYEAAKRGFSTATDLADYLVRKGIPFRDSHEVVGKAVGYGVETGKDLSEMTLEELQGFSKEIQQDVFDVLTLEGSVAARNHIGGTAPAQVRIAVENAKQELEGRNS.

It belongs to the lyase 1 family. Argininosuccinate lyase subfamily.

The protein resides in the cytoplasm. It catalyses the reaction 2-(N(omega)-L-arginino)succinate = fumarate + L-arginine. The protein operates within amino-acid biosynthesis; L-arginine biosynthesis; L-arginine from L-ornithine and carbamoyl phosphate: step 3/3. The chain is Argininosuccinate lyase from Saccharophagus degradans (strain 2-40 / ATCC 43961 / DSM 17024).